The sequence spans 376 residues: uncharacterized protein (376 aa).

2 helical membrane-spanning segments follow: residues 153–173 (QGTL…VLFA) and 188–208 (HRPF…LAVY).

The protein localises to the membrane. This is an uncharacterized protein from Saccharomyces cerevisiae (strain ATCC 204508 / S288c) (Baker's yeast).